The following is a 617-amino-acid chain: Zinc metalloproteinase nas-36 (617 aa).

The first 22 residues, 1 to 22, serve as a signal peptide directing secretion; sequence MRLCHSIILFNSLISISICSKA. A propeptide spanning residues 23 to 126 is cleaved from the precursor; that stretch reads DDPALLVASE…SKDKTKRLRR (104 aa). The Peptidase M12A domain occupies 127–322; that stretch reads SFVSDKTATW…VATINTAYCK (196 aa). Cystine bridges form between cysteine 169–cysteine 321, cysteine 192–cysteine 211, cysteine 325–cysteine 346, cysteine 348–cysteine 357, cysteine 368–cysteine 397, cysteine 425–cysteine 445, cysteine 519–cysteine 550, cysteine 523–cysteine 555, and cysteine 535–cysteine 540. Residue asparagine 174 is glycosylated (N-linked (GlcNAc...) asparagine). Residue histidine 219 participates in Zn(2+) binding. The active site involves glutamate 220. Residues histidine 223 and histidine 229 each contribute to the Zn(2+) site. The region spanning 317-358 is the EGF-like domain; that stretch reads NTAYCKDECKSEKTKCENGGYMRPSKCSECLCPDGLGGEKCE. Positions 368–482 constitute a CUB domain; sequence CGGIIKLTEE…IGFKIQAKST (115 aa). The 50-residue stretch at 507-556 folds into the TSP type-1 domain; sequence PNVWADWGEWSMCSRTCGGCGIRSRVRSCRSKKCEGRRQEFGTCNLKACP.

It depends on Zn(2+) as a cofactor. In terms of tissue distribution, expressed in hypodermal cells. Also detected in the hypodermal seam cells in L4 larvae and young adults. In old adult hermaphrodites, it localizes to the vulva (at protein level).

Its subcellular location is the secreted. Metalloprotease. Involved in molting, a process during larval stages in which a new cuticle is formed and the old cuticle is shed. This chain is Zinc metalloproteinase nas-36 (nas-36), found in Caenorhabditis elegans.